The following is a 1432-amino-acid chain: DNA-directed RNA polymerase subunit beta (1432 aa).

It belongs to the RNA polymerase beta chain family. The RNAP catalytic core consists of 2 alpha, 1 beta, 1 beta' and 1 omega subunit. When a sigma factor is associated with the core the holoenzyme is formed, which can initiate transcription.

It catalyses the reaction RNA(n) + a ribonucleoside 5'-triphosphate = RNA(n+1) + diphosphate. In terms of biological role, DNA-dependent RNA polymerase catalyzes the transcription of DNA into RNA using the four ribonucleoside triphosphates as substrates. The sequence is that of DNA-directed RNA polymerase subunit beta from Solibacter usitatus (strain Ellin6076).